We begin with the raw amino-acid sequence, 152 residues long: 6,7-dimethyl-8-ribityllumazine synthase (152 aa).

5-amino-6-(D-ribitylamino)uracil-binding positions include phenylalanine 24, 56 to 58 (SFE), and 80 to 82 (VVV). Residue 85–86 (ET) coordinates (2S)-2-hydroxy-3-oxobutyl phosphate. The active-site Proton donor is the histidine 88. Position 113 (phenylalanine 113) interacts with 5-amino-6-(D-ribitylamino)uracil. Arginine 127 contacts (2S)-2-hydroxy-3-oxobutyl phosphate.

The protein belongs to the DMRL synthase family.

The catalysed reaction is (2S)-2-hydroxy-3-oxobutyl phosphate + 5-amino-6-(D-ribitylamino)uracil = 6,7-dimethyl-8-(1-D-ribityl)lumazine + phosphate + 2 H2O + H(+). Its pathway is cofactor biosynthesis; riboflavin biosynthesis; riboflavin from 2-hydroxy-3-oxobutyl phosphate and 5-amino-6-(D-ribitylamino)uracil: step 1/2. Catalyzes the formation of 6,7-dimethyl-8-ribityllumazine by condensation of 5-amino-6-(D-ribitylamino)uracil with 3,4-dihydroxy-2-butanone 4-phosphate. This is the penultimate step in the biosynthesis of riboflavin. In Thermococcus onnurineus (strain NA1), this protein is 6,7-dimethyl-8-ribityllumazine synthase.